A 91-amino-acid chain; its full sequence is UPF0298 protein OB1449 (91 aa).

Belongs to the UPF0298 family.

Its subcellular location is the cytoplasm. This is UPF0298 protein OB1449 from Oceanobacillus iheyensis (strain DSM 14371 / CIP 107618 / JCM 11309 / KCTC 3954 / HTE831).